We begin with the raw amino-acid sequence, 344 residues long: Oxygen sensor histidine kinase NreB (344 aa).

[4Fe-4S] cluster-binding residues include C58, C61, C73, and C76. The region spanning 152 to 344 (RISRELHDSV…GTNVTLNIPI (193 aa)) is the Histidine kinase domain. Residue H158 is modified to Phosphohistidine; by autocatalysis.

The cofactor is [4Fe-4S] cluster. In terms of processing, autophosphorylated.

The protein localises to the cytoplasm. It carries out the reaction ATP + protein L-histidine = ADP + protein N-phospho-L-histidine.. In terms of biological role, member of the two-component regulatory system NreB/NreC involved in the control of dissimilatory nitrate/nitrite reduction in response to oxygen. NreB functions as a direct oxygen sensor histidine kinase which is autophosphorylated, in the absence of oxygen, probably at the conserved histidine residue, and transfers its phosphate group probably to a conserved aspartate residue of NreC. NreB/NreC activates the expression of the nitrate (narGHJI) and nitrite (nir) reductase operons, as well as the putative nitrate transporter gene narT. This chain is Oxygen sensor histidine kinase NreB (nreB), found in Staphylococcus aureus (strain JH1).